Reading from the N-terminus, the 1039-residue chain is uncharacterized protein (1039 aa).

The span at 1 to 19 shows a compositional bias: basic residues; sequence MSLLMAHRKSKSSQRKLRN. The tract at residues 1-38 is disordered; that stretch reads MSLLMAHRKSKSSQRKLRNRSSSLTPQKRRIRASKGSH.

This is an uncharacterized protein from Sinorhizobium fredii (strain NBRC 101917 / NGR234).